The primary structure comprises 95 residues: Phosphoribosyl-ATP pyrophosphatase (95 aa).

Belongs to the PRA-PH family.

Its subcellular location is the cytoplasm. The catalysed reaction is 1-(5-phospho-beta-D-ribosyl)-ATP + H2O = 1-(5-phospho-beta-D-ribosyl)-5'-AMP + diphosphate + H(+). The protein operates within amino-acid biosynthesis; L-histidine biosynthesis; L-histidine from 5-phospho-alpha-D-ribose 1-diphosphate: step 2/9. In Sulfolobus acidocaldarius (strain ATCC 33909 / DSM 639 / JCM 8929 / NBRC 15157 / NCIMB 11770), this protein is Phosphoribosyl-ATP pyrophosphatase.